The following is a 438-amino-acid chain: GTPase Obg (438 aa).

Residues 2–160 (SMFLDTAKIS…RELELELKIL (159 aa)) enclose the Obg domain. The segment at 128–147 (NIRFATPRNPAPEIAENGEP) is disordered. The 178-residue stretch at 161 to 338 (ADVGLVGFPS…LLDATANLLA (178 aa)) folds into the OBG-type G domain. Residues 167 to 174 (GFPSVGKS), 192 to 196 (FTTIV), 214 to 217 (DLPG), 284 to 287 (NKMD), and 319 to 321 (STL) contribute to the GTP site. 2 residues coordinate Mg(2+): Ser-174 and Thr-194. Residues 360–438 (GFSEEEKAFE…IGNFEFEFVD (79 aa)) form the OCT domain.

This sequence belongs to the TRAFAC class OBG-HflX-like GTPase superfamily. OBG GTPase family. As to quaternary structure, monomer. Requires Mg(2+) as cofactor.

It localises to the cytoplasm. Functionally, an essential GTPase which binds GTP, GDP and possibly (p)ppGpp with moderate affinity, with high nucleotide exchange rates and a fairly low GTP hydrolysis rate. Plays a role in control of the cell cycle, stress response, ribosome biogenesis and in those bacteria that undergo differentiation, in morphogenesis control. The chain is GTPase Obg from Streptococcus uberis (strain ATCC BAA-854 / 0140J).